We begin with the raw amino-acid sequence, 740 residues long: NAD(P)H-quinone oxidoreductase subunit 5, chloroplastic (740 aa).

16 helical membrane passes run W9–F29, W40–I60, I89–I109, F125–I145, I147–T167, G185–F205, N219–S239, T258–A278, V286–A306, L327–I347, A354–S374, I396–S416, W425–Y445, L543–F563, V602–V622, and S717–F737.

It belongs to the complex I subunit 5 family. NDH is composed of at least 16 different subunits, 5 of which are encoded in the nucleus.

The protein resides in the plastid. Its subcellular location is the chloroplast thylakoid membrane. It carries out the reaction a plastoquinone + NADH + (n+1) H(+)(in) = a plastoquinol + NAD(+) + n H(+)(out). The catalysed reaction is a plastoquinone + NADPH + (n+1) H(+)(in) = a plastoquinol + NADP(+) + n H(+)(out). In terms of biological role, NDH shuttles electrons from NAD(P)H:plastoquinone, via FMN and iron-sulfur (Fe-S) centers, to quinones in the photosynthetic chain and possibly in a chloroplast respiratory chain. The immediate electron acceptor for the enzyme in this species is believed to be plastoquinone. Couples the redox reaction to proton translocation, and thus conserves the redox energy in a proton gradient. The sequence is that of NAD(P)H-quinone oxidoreductase subunit 5, chloroplastic (ndhF) from Solanum bulbocastanum (Wild potato).